The sequence spans 552 residues: Serine palmitoyltransferase 3 (552 aa).

Positions 1 to 29 are disordered; that stretch reads MANPGGGAVCNGKLHNHKKQSNGSQSRNC. The helical transmembrane segment at 59–79 threads the bilayer; that stretch reads PLHVMVFTYMGYGIGTLFGYL. An N6-(pyridoxal phosphate)lysine modification is found at lysine 371.

This sequence belongs to the class-II pyridoxal-phosphate-dependent aminotransferase family. As to quaternary structure, component of the serine palmitoyltransferase (SPT) complex, which is composed of SPTLC1, SPTLC2 or SPTLC3 and SPTSSA or SPTSSB. The heterodimer consisting of SPTLC1 and SPTLC2/SPTLC3 forms the catalytic core of the enzyme, while SPTSSA or SPTSSB subunits determine substrate specificity. SPT also interacts with ORMDL proteins, especially ORMDL3, which negatively regulate SPT activity in the presence of ceramides. Requires pyridoxal 5'-phosphate as cofactor. As to expression, expressed in most tissues, except peripheral blood cells and bone marrow, with highest levels in heart, kidney, liver, uterus and skin.

It is found in the endoplasmic reticulum membrane. It carries out the reaction L-serine + hexadecanoyl-CoA + H(+) = 3-oxosphinganine + CO2 + CoA. It catalyses the reaction dodecanoyl-CoA + L-serine + H(+) = 3-oxotetradecasphinganine + CO2 + CoA. The catalysed reaction is tetradecanoyl-CoA + L-serine + H(+) = 3-oxohexadecasphinganine + CO2 + CoA. The enzyme catalyses octadecanoyl-CoA + L-serine + H(+) = 3-oxoeicosasphinganine + CO2 + CoA. Its pathway is lipid metabolism; sphingolipid metabolism. With respect to regulation, SPT complex catalytic activity is negatively regulated by ORMDL proteins, including ORMDL3, in the presence of ceramides. This mechanism allows to maintain ceramide levels at sufficient concentrations for the production of complex sphingolipids, but which prevents the accumulation of ceramides to levels that trigger apoptosis. Its function is as follows. Component of the serine palmitoyltransferase multisubunit enzyme (SPT) that catalyzes the initial and rate-limiting step in sphingolipid biosynthesis by condensing L-serine and activated acyl-CoA (most commonly palmitoyl-CoA) to form long-chain bases. The SPT complex is composed of SPTLC1, SPTLC2 or SPTLC3 and SPTSSA or SPTSSB. Within this complex, the heterodimer consisting of SPTLC1 and SPTLC2/SPTLC3 forms the catalytic core. The composition of the serine palmitoyltransferase (SPT) complex determines the substrate preference. The SPTLC1-SPTLC2-SPTSSA complex shows a strong preference for C16-CoA substrate, while the SPTLC1-SPTLC3-SPTSSA isozyme uses both C14-CoA and C16-CoA as substrates, with a slight preference for C14-CoA. The SPTLC1-SPTLC2-SPTSSB complex shows a strong preference for C18-CoA substrate, while the SPTLC1-SPTLC3-SPTSSB isozyme displays an ability to use a broader range of acyl-CoAs, without apparent preference. This Homo sapiens (Human) protein is Serine palmitoyltransferase 3.